Consider the following 343-residue polypeptide: DNA-directed RNA polymerase subunit alpha (343 aa).

Positions 1–239 (MGETVTIQKN…DQLNVFVNFE (239 aa)) are alpha N-terminal domain (alpha-NTD). Residues 255-343 (FNPAFLKKVD…ELAKRFEDHY (89 aa)) are alpha C-terminal domain (alpha-CTD).

Belongs to the RNA polymerase alpha chain family. As to quaternary structure, homodimer. The RNAP catalytic core consists of 2 alpha, 1 beta, 1 beta' and 1 omega subunit. When a sigma factor is associated with the core the holoenzyme is formed, which can initiate transcription.

It catalyses the reaction RNA(n) + a ribonucleoside 5'-triphosphate = RNA(n+1) + diphosphate. DNA-dependent RNA polymerase catalyzes the transcription of DNA into RNA using the four ribonucleoside triphosphates as substrates. The protein is DNA-directed RNA polymerase subunit alpha of Bradyrhizobium diazoefficiens (strain JCM 10833 / BCRC 13528 / IAM 13628 / NBRC 14792 / USDA 110).